The chain runs to 147 residues: Transcriptional repressor NrdR (147 aa).

A zinc finger spans residues 3–34; sequence CPFCGHLETQVVETRVSEDADFVRRRRQCSAC. The 91-residue stretch at 49–139 folds into the ATP-cone domain; the sequence is PVVVKKDGSR…VYRSFEDVDE (91 aa).

Belongs to the NrdR family. It depends on Zn(2+) as a cofactor.

Negatively regulates transcription of bacterial ribonucleotide reductase nrd genes and operons by binding to NrdR-boxes. This chain is Transcriptional repressor NrdR, found in Variovorax paradoxus (strain S110).